The chain runs to 481 residues: Cysteine protease atg-4.1 (481 aa).

Residue Cys-112 is the Nucleophile of the active site. Catalysis depends on residues Asp-313 and His-315. Residues 462-481 are disordered; sequence DVHTEEEDADEDNDDDVANA.

This sequence belongs to the peptidase C54 family.

The protein localises to the cytoplasm. The enzyme catalyses [protein]-C-terminal L-amino acid-glycyl-phosphatidylethanolamide + H2O = [protein]-C-terminal L-amino acid-glycine + a 1,2-diacyl-sn-glycero-3-phosphoethanolamine. In terms of biological role, cysteine protease required for autophagy. Cleaves the C-terminal amino acid of ATG8 family proteins lgg-1, to reveal a C-terminal glycine. Exposure of the glycine at the C-terminus is essential for ATG8 proteins conjugation to phosphatidylethanolamine (PE) and insertion to membranes, which is necessary for autophagy. Its cleavage activity is functionally redundant to atg-4.2, but it cleaves lgg-1 precursors more efficiently than atg-4.2. Acts redundantly with atg-4.2 to promote the lgg-1 delipidation to release the protein from membranes, which facilitates multiple events during macroautophagy. Unlike atg-4.2 does not seem to be required for autophagosome maturation. The polypeptide is Cysteine protease atg-4.1 (Caenorhabditis elegans).